The sequence spans 305 residues: Protoheme IX farnesyltransferase 2 (305 aa).

8 helical membrane passes run 31-51 (VVML…ETWI), 53-73 (WKIL…AAVI), 103-123 (ALVF…LWVN), 125-145 (LTAL…TMYL), 152-172 (NIVI…TAVT), 179-199 (ALLL…ALAI), 231-251 (VLLA…AIYL), and 277-297 (AMKT…VLLV).

Belongs to the UbiA prenyltransferase family. Protoheme IX farnesyltransferase subfamily.

It is found in the cell inner membrane. It catalyses the reaction heme b + (2E,6E)-farnesyl diphosphate + H2O = Fe(II)-heme o + diphosphate. Its pathway is porphyrin-containing compound metabolism; heme O biosynthesis; heme O from protoheme: step 1/1. Its function is as follows. Converts heme B (protoheme IX) to heme O by substitution of the vinyl group on carbon 2 of heme B porphyrin ring with a hydroxyethyl farnesyl side group. The protein is Protoheme IX farnesyltransferase 2 of Pseudoalteromonas atlantica (strain T6c / ATCC BAA-1087).